A 266-amino-acid chain; its full sequence is Thymidylate synthase (266 aa).

DUMP-binding positions include R20 and R129–R130. C149 acts as the Nucleophile in catalysis. DUMP is bound by residues R169–D172, N180, and H210–Y212. D172 contributes to the (6R)-5,10-methylene-5,6,7,8-tetrahydrofolate binding site. A265 is a (6R)-5,10-methylene-5,6,7,8-tetrahydrofolate binding site.

Belongs to the thymidylate synthase family. Bacterial-type ThyA subfamily. As to quaternary structure, homodimer.

It localises to the cytoplasm. It catalyses the reaction dUMP + (6R)-5,10-methylene-5,6,7,8-tetrahydrofolate = 7,8-dihydrofolate + dTMP. It functions in the pathway pyrimidine metabolism; dTTP biosynthesis. In terms of biological role, catalyzes the reductive methylation of 2'-deoxyuridine-5'-monophosphate (dUMP) to 2'-deoxythymidine-5'-monophosphate (dTMP) while utilizing 5,10-methylenetetrahydrofolate (mTHF) as the methyl donor and reductant in the reaction, yielding dihydrofolate (DHF) as a by-product. This enzymatic reaction provides an intracellular de novo source of dTMP, an essential precursor for DNA biosynthesis. This is Thymidylate synthase from Bifidobacterium longum (strain NCC 2705).